The primary structure comprises 192 residues: Protein GrpE (192 aa).

Belongs to the GrpE family. As to quaternary structure, homodimer.

The protein localises to the cytoplasm. Functionally, participates actively in the response to hyperosmotic and heat shock by preventing the aggregation of stress-denatured proteins, in association with DnaK and GrpE. It is the nucleotide exchange factor for DnaK and may function as a thermosensor. Unfolded proteins bind initially to DnaJ; upon interaction with the DnaJ-bound protein, DnaK hydrolyzes its bound ATP, resulting in the formation of a stable complex. GrpE releases ADP from DnaK; ATP binding to DnaK triggers the release of the substrate protein, thus completing the reaction cycle. Several rounds of ATP-dependent interactions between DnaJ, DnaK and GrpE are required for fully efficient folding. The protein is Protein GrpE of Neisseria gonorrhoeae (strain ATCC 700825 / FA 1090).